A 320-amino-acid polypeptide reads, in one-letter code: ATP-dependent 6-phosphofructokinase (320 aa).

An ATP-binding site is contributed by G12. 22–26 is an ADP binding site; sequence RGVVR. ATP is bound by residues 73 to 74 and 103 to 106; these read RF and GDGS. Residue D104 participates in Mg(2+) binding. 126–128 contacts substrate; that stretch reads TID. Residue D128 is the Proton acceptor of the active site. R155 is an ADP binding site. Substrate is bound by residues R163 and 170–172; that span reads MGR. ADP is bound by residues 186 to 188, K212, and 214 to 216; these read GCE and KKH. Substrate-binding positions include E223, R244, and 250–253; that span reads HIQR.

This sequence belongs to the phosphofructokinase type A (PFKA) family. ATP-dependent PFK group I subfamily. Prokaryotic clade 'B1' sub-subfamily. Homotetramer. Requires Mg(2+) as cofactor.

It is found in the cytoplasm. The enzyme catalyses beta-D-fructose 6-phosphate + ATP = beta-D-fructose 1,6-bisphosphate + ADP + H(+). The protein operates within carbohydrate degradation; glycolysis; D-glyceraldehyde 3-phosphate and glycerone phosphate from D-glucose: step 3/4. Allosterically activated by ADP and other diphosphonucleosides, and allosterically inhibited by phosphoenolpyruvate. Functionally, catalyzes the phosphorylation of D-fructose 6-phosphate to fructose 1,6-bisphosphate by ATP, the first committing step of glycolysis. This chain is ATP-dependent 6-phosphofructokinase, found in Aliivibrio salmonicida (strain LFI1238) (Vibrio salmonicida (strain LFI1238)).